A 193-amino-acid polypeptide reads, in one-letter code: Ion-translocating oxidoreductase complex subunit A (193 aa).

6 consecutive transmembrane segments (helical) span residues 5 to 25, 39 to 59, 62 to 82, 102 to 122, 134 to 154, and 170 to 190; these read LMLL…FLGL, IGMG…TWLI, FLLV…LVIA, VLGI…VALL, VLYG…FAGL, and APIS…FAGL.

The protein belongs to the NqrDE/RnfAE family. The complex is composed of six subunits: RnfA, RnfB, RnfC, RnfD, RnfE and RnfG.

The protein localises to the cell inner membrane. Its function is as follows. Part of a membrane-bound complex that couples electron transfer with translocation of ions across the membrane. In Azoarcus sp. (strain BH72), this protein is Ion-translocating oxidoreductase complex subunit A.